Here is a 239-residue protein sequence, read N- to C-terminus: Probable transcriptional regulatory protein BCAH187_A0615 (239 aa).

It belongs to the TACO1 family. YeeN subfamily.

The protein resides in the cytoplasm. This chain is Probable transcriptional regulatory protein BCAH187_A0615, found in Bacillus cereus (strain AH187).